A 230-amino-acid chain; its full sequence is Probable methylthioribulose-1-phosphate dehydratase (230 aa).

C87 provides a ligand contact to substrate. Zn(2+)-binding residues include H105 and H107. The Proton donor/acceptor role is filled by E129. H185 is a binding site for Zn(2+).

The protein belongs to the aldolase class II family. MtnB subfamily. Zn(2+) serves as cofactor.

It localises to the cytoplasm. The enzyme catalyses 5-(methylsulfanyl)-D-ribulose 1-phosphate = 5-methylsulfanyl-2,3-dioxopentyl phosphate + H2O. The protein operates within amino-acid biosynthesis; L-methionine biosynthesis via salvage pathway; L-methionine from S-methyl-5-thio-alpha-D-ribose 1-phosphate: step 2/6. Functionally, catalyzes the dehydration of methylthioribulose-1-phosphate (MTRu-1-P) into 2,3-diketo-5-methylthiopentyl-1-phosphate (DK-MTP-1-P). The protein is Probable methylthioribulose-1-phosphate dehydratase of Drosophila pseudoobscura pseudoobscura (Fruit fly).